A 366-amino-acid chain; its full sequence is Protein FAM110B (366 aa).

Disordered stretches follow at residues 127-152 (SSEG…DTTD), 163-182 (KVYP…HVSR), and 216-252 (CSSS…RPSL). Phosphoserine occurs at positions 234 and 297. A disordered region spans residues 313-333 (DCEQSQDSNSDLRNDDSANDR). Residues 322 to 331 (SDLRNDDSAN) show a composition bias toward basic and acidic residues.

This sequence belongs to the FAM110 family.

Its subcellular location is the cytoplasm. It localises to the cytoskeleton. The protein localises to the microtubule organizing center. It is found in the centrosome. This chain is Protein FAM110B (Fam110b), found in Mus musculus (Mouse).